Consider the following 616-residue polypeptide: Chaperone protein HscA (616 aa).

It belongs to the heat shock protein 70 family.

In terms of biological role, chaperone involved in the maturation of iron-sulfur cluster-containing proteins. Has a low intrinsic ATPase activity which is markedly stimulated by HscB. Involved in the maturation of IscU. The polypeptide is Chaperone protein HscA (Pectobacterium atrosepticum (strain SCRI 1043 / ATCC BAA-672) (Erwinia carotovora subsp. atroseptica)).